The chain runs to 170 residues: Ureidoglycolate lyase (170 aa).

This sequence belongs to the ureidoglycolate lyase family. Homodimer. Requires Ni(2+) as cofactor.

The catalysed reaction is (S)-ureidoglycolate = urea + glyoxylate. It participates in nitrogen metabolism; (S)-allantoin degradation. In terms of biological role, catalyzes the catabolism of the allantoin degradation intermediate (S)-ureidoglycolate, generating urea and glyoxylate. Involved in the utilization of allantoin as nitrogen source. The sequence is that of Ureidoglycolate lyase from Pseudomonas syringae pv. syringae (strain B728a).